Reading from the N-terminus, the 262-residue chain is tRNA pseudouridine synthase A (262 aa).

Aspartate 51 (nucleophile) is an active-site residue. Tyrosine 109 lines the substrate pocket.

Belongs to the tRNA pseudouridine synthase TruA family. As to quaternary structure, homodimer.

It carries out the reaction uridine(38/39/40) in tRNA = pseudouridine(38/39/40) in tRNA. In terms of biological role, formation of pseudouridine at positions 38, 39 and 40 in the anticodon stem and loop of transfer RNAs. This Aliivibrio fischeri (strain ATCC 700601 / ES114) (Vibrio fischeri) protein is tRNA pseudouridine synthase A.